A 236-amino-acid polypeptide reads, in one-letter code: Eukaryotic translation initiation factor 3 subunit J (236 aa).

Disordered regions lie at residues 1–88 (MADD…LANM) and 188–236 (SEKQ…DDFM). Positions 28–46 (GEDDDEDVKESWEDEEEKK) are enriched in acidic residues. Composition is skewed to basic and acidic residues over residues 47–58 (DEEKPTKTEAPV), 68–88 (AKLE…LANM), and 188–197 (SEKQKMEKAN). Coiled-coil stretches lie at residues 61-112 (KPNK…LKSA) and 174-209 (ADIK…KGKV). Over residues 201–210 (SAAKAKGKVS) the composition is skewed to basic residues.

Belongs to the eIF-3 subunit J family. As to quaternary structure, component of the eukaryotic translation initiation factor 3 (eIF-3) complex. The eIF-3 complex interacts with pix.

It localises to the cytoplasm. Component of the eukaryotic translation initiation factor 3 (eIF-3) complex, which is involved in protein synthesis of a specialized repertoire of mRNAs and, together with other initiation factors, stimulates binding of mRNA and methionyl-tRNAi to the 40S ribosome. The eIF-3 complex specifically targets and initiates translation of a subset of mRNAs involved in cell proliferation. This chain is Eukaryotic translation initiation factor 3 subunit J, found in Drosophila virilis (Fruit fly).